The primary structure comprises 145 residues: Flagellar assembly factor FliW (145 aa).

Belongs to the FliW family. As to quaternary structure, interacts with translational regulator CsrA and flagellin(s).

The protein localises to the cytoplasm. Functionally, acts as an anti-CsrA protein, binds CsrA and prevents it from repressing translation of its target genes, one of which is flagellin. Binds to flagellin and participates in the assembly of the flagellum. The sequence is that of Flagellar assembly factor FliW from Thermosipho africanus (strain TCF52B).